The following is a 69-amino-acid chain: Conotoxin Eb6.14 (69 aa).

The signal sequence occupies residues 1-17; sequence VLIIAVLFLTACQLTTA. Residues 18–41 constitute a propeptide that is removed on maturation; it reads ETYSRGRQKHRARRSTDKNSKWTR. Disulfide bonds link Cys43-Cys57, Cys50-Cys61, and Cys56-Cys68.

It belongs to the conotoxin O1 superfamily. As to expression, expressed by the venom duct.

The protein resides in the secreted. The protein is Conotoxin Eb6.14 (E1) of Conus ebraeus (Hebrew cone).